We begin with the raw amino-acid sequence, 270 residues long: MAAPGEALTPSSYITHHLTNLSTYKLGLVAEESSFWNVHIDSLFFSVLTGLIFLGVFRAVARKATAGVPGKLQCAVEMVVEFVDKNVKDTFHGRNPLIAPLALTIFCWVFLMNLMDLVPIDFLPYPAQHWLGIPYLKVVPSADVNITMAMALGVFALMIYYSIKVKGLGGFAKELALHPFNHWIMIPFNLLIEVVSLLAKPLSLGMRLFGNMFAGEVVFILCAAMLPWYLQWMGSLPWAIFHILVILIQSFVFMMLTIVYMSMAHEDNDH.

Helical transmembrane passes span 37 to 57 (NVHIDSLFFSVLTGLIFLGVF), 98 to 118 (IAPLALTIFCWVFLMNLMDLV), 143 to 163 (DVNITMAMALGVFALMIYYSI), 208 to 228 (LFGNMFAGEVVFILCAAMLPW), and 239 to 259 (AIFHILVILIQSFVFMMLTIV).

Belongs to the ATPase A chain family. As to quaternary structure, F-type ATPases have 2 components, CF(1) - the catalytic core - and CF(0) - the membrane proton channel. CF(1) has five subunits: alpha(3), beta(3), gamma(1), delta(1), epsilon(1). CF(0) has three main subunits: a(1), b(2) and c(9-12). The alpha and beta chains form an alternating ring which encloses part of the gamma chain. CF(1) is attached to CF(0) by a central stalk formed by the gamma and epsilon chains, while a peripheral stalk is formed by the delta and b chains.

Its subcellular location is the cell inner membrane. In terms of biological role, key component of the proton channel; it plays a direct role in the translocation of protons across the membrane. The sequence is that of ATP synthase subunit a from Vibrio cholerae serotype O1 (strain ATCC 39315 / El Tor Inaba N16961).